We begin with the raw amino-acid sequence, 61 residues long: DNA-directed RNA polymerase subunit Rpo10 (61 aa).

Cysteine 6, cysteine 9, cysteine 42, and cysteine 43 together coordinate Zn(2+).

This sequence belongs to the archaeal Rpo10/eukaryotic RPB10 RNA polymerase subunit family. As to quaternary structure, part of the RNA polymerase complex. The cofactor is Zn(2+).

The protein localises to the cytoplasm. It carries out the reaction RNA(n) + a ribonucleoside 5'-triphosphate = RNA(n+1) + diphosphate. Functionally, DNA-dependent RNA polymerase (RNAP) catalyzes the transcription of DNA into RNA using the four ribonucleoside triphosphates as substrates. The sequence is that of DNA-directed RNA polymerase subunit Rpo10 from Methanothrix thermoacetophila (strain DSM 6194 / JCM 14653 / NBRC 101360 / PT) (Methanosaeta thermophila).